Reading from the N-terminus, the 313-residue chain is uncharacterized protein (313 aa).

29–61 (ALVTGGGTGLGKAIATTFAHLGASVAIAARRLD) provides a ligand contact to NADP(+).

Belongs to the short-chain dehydrogenases/reductases (SDR) family. 2,4-dienoyl-CoA reductase subfamily.

This is an uncharacterized protein from Caenorhabditis elegans.